A 392-amino-acid polypeptide reads, in one-letter code: DNA replication and repair protein RecF (392 aa).

30 to 37 (GPNAAGKT) contributes to the ATP binding site.

This sequence belongs to the RecF family.

It localises to the cytoplasm. Functionally, the RecF protein is involved in DNA metabolism; it is required for DNA replication and normal SOS inducibility. RecF binds preferentially to single-stranded, linear DNA. It also seems to bind ATP. This is DNA replication and repair protein RecF from Chloroflexus aurantiacus (strain ATCC 29364 / DSM 637 / Y-400-fl).